A 168-amino-acid polypeptide reads, in one-letter code: Small ribosomal subunit protein uS8 (168 aa).

Residues 59 to 93 (EEFKKMKELAEKSPNPKMRRYLQQLIDYNKGTQYP) form a not found in other S8 sequences region.

It belongs to the universal ribosomal protein uS8 family. As to quaternary structure, part of the 30S ribosomal subunit. Contacts proteins S5 and S12.

Its function is as follows. One of the primary rRNA binding proteins, it binds directly to 16S rRNA central domain where it helps coordinate assembly of the platform of the 30S subunit. The protein is Small ribosomal subunit protein uS8 of Aquifex pyrophilus.